Reading from the N-terminus, the 471-residue chain is Protoporphyrinogen oxidase (471 aa).

FAD is bound by residues 16–21 (GGGISG), 39–40 (ES), Ala47, 61–64 (GPNS), Val251, Trp408, and 446–448 (VGL).

It belongs to the protoporphyrinogen/coproporphyrinogen oxidase family. Protoporphyrinogen oxidase subfamily. As to quaternary structure, monomer. Homodimer. FAD is required as a cofactor.

The protein localises to the cytoplasm. Its subcellular location is the cell membrane. It catalyses the reaction protoporphyrinogen IX + 3 O2 = protoporphyrin IX + 3 H2O2. It functions in the pathway porphyrin-containing compound metabolism; protoporphyrin-IX biosynthesis; protoporphyrin-IX from protoporphyrinogen-IX: step 1/1. Its activity is regulated as follows. Strongly inhibited by acifluorfen. In terms of biological role, catalyzes the 6-electron oxidation of protoporphyrinogen-IX to form protoporphyrin-IX. Does not oxidize coproporphyrinogen III. Involved in the classical protoporphyrin-dependent (PPD) heme b biosynthesis. The protein is Protoporphyrinogen oxidase of Myxococcus xanthus.